The chain runs to 316 residues: Transcription termination/antitermination protein NusG (316 aa).

Belongs to the NusG family.

Its function is as follows. Participates in transcription elongation, termination and antitermination. The sequence is that of Transcription termination/antitermination protein NusG from Mycoplasma genitalium (strain ATCC 33530 / DSM 19775 / NCTC 10195 / G37) (Mycoplasmoides genitalium).